Here is a 156-residue protein sequence, read N- to C-terminus: E3 ubiquitin-protein ligase RNF181 (156 aa).

Residues Cys-79 to Arg-120 form an RING-type; atypical zinc finger.

It belongs to the RNF181 family.

It carries out the reaction S-ubiquitinyl-[E2 ubiquitin-conjugating enzyme]-L-cysteine + [acceptor protein]-L-lysine = [E2 ubiquitin-conjugating enzyme]-L-cysteine + N(6)-ubiquitinyl-[acceptor protein]-L-lysine.. Its pathway is protein modification; protein ubiquitination. In terms of biological role, E3 ubiquitin-protein ligase which accepts ubiquitin from an E2 ubiquitin-conjugating enzyme in the form of a thioester and then directly transfers the ubiquitin to targeted substrates. Catalyzes monoubiquitination of 26S proteasome subunit PSMC2/RPT1. The chain is E3 ubiquitin-protein ligase RNF181 (rnf181) from Xenopus tropicalis (Western clawed frog).